The primary structure comprises 183 residues: Protein GrpE (183 aa).

Basic and acidic residues predominate over residues methionine 1 to lysine 14. Residues methionine 1–glutamate 20 form a disordered region.

Belongs to the GrpE family. As to quaternary structure, homodimer.

The protein localises to the cytoplasm. Participates actively in the response to hyperosmotic and heat shock by preventing the aggregation of stress-denatured proteins, in association with DnaK and GrpE. It is the nucleotide exchange factor for DnaK and may function as a thermosensor. Unfolded proteins bind initially to DnaJ; upon interaction with the DnaJ-bound protein, DnaK hydrolyzes its bound ATP, resulting in the formation of a stable complex. GrpE releases ADP from DnaK; ATP binding to DnaK triggers the release of the substrate protein, thus completing the reaction cycle. Several rounds of ATP-dependent interactions between DnaJ, DnaK and GrpE are required for fully efficient folding. In Vibrio vulnificus (strain CMCP6), this protein is Protein GrpE.